Reading from the N-terminus, the 455-residue chain is Bifunctional protein GlmU (455 aa).

A pyrophosphorylase region spans residues 1–229 (MYNCAILLAA…FEETMGVNSR (229 aa)). UDP-N-acetyl-alpha-D-glucosamine-binding positions include 8 to 11 (LAAG), Lys-22, Gln-73, and 78 to 79 (GT). Asp-103 contributes to the Mg(2+) binding site. The UDP-N-acetyl-alpha-D-glucosamine site is built by Gly-140, Glu-155, Asn-170, and Asn-227. Asn-227 is a binding site for Mg(2+). Residues 230 to 250 (LQLAEVEAIMRKRINAMHLEN) are linker. An N-acetyltransferase region spans residues 251–455 (GVTIIDPNNT…EDWVKKKDEK (205 aa)). UDP-N-acetyl-alpha-D-glucosamine is bound by residues Arg-332 and Lys-350. His-362 serves as the catalytic Proton acceptor. 2 residues coordinate UDP-N-acetyl-alpha-D-glucosamine: Tyr-365 and Asn-376. Acetyl-CoA contacts are provided by residues 385-386 (NY), Ala-422, and Arg-439.

This sequence in the N-terminal section; belongs to the N-acetylglucosamine-1-phosphate uridyltransferase family. In the C-terminal section; belongs to the transferase hexapeptide repeat family. As to quaternary structure, homotrimer. It depends on Mg(2+) as a cofactor.

Its subcellular location is the cytoplasm. It catalyses the reaction alpha-D-glucosamine 1-phosphate + acetyl-CoA = N-acetyl-alpha-D-glucosamine 1-phosphate + CoA + H(+). The enzyme catalyses N-acetyl-alpha-D-glucosamine 1-phosphate + UTP + H(+) = UDP-N-acetyl-alpha-D-glucosamine + diphosphate. Its pathway is nucleotide-sugar biosynthesis; UDP-N-acetyl-alpha-D-glucosamine biosynthesis; N-acetyl-alpha-D-glucosamine 1-phosphate from alpha-D-glucosamine 6-phosphate (route II): step 2/2. It functions in the pathway nucleotide-sugar biosynthesis; UDP-N-acetyl-alpha-D-glucosamine biosynthesis; UDP-N-acetyl-alpha-D-glucosamine from N-acetyl-alpha-D-glucosamine 1-phosphate: step 1/1. It participates in bacterial outer membrane biogenesis; LPS lipid A biosynthesis. In terms of biological role, catalyzes the last two sequential reactions in the de novo biosynthetic pathway for UDP-N-acetylglucosamine (UDP-GlcNAc). The C-terminal domain catalyzes the transfer of acetyl group from acetyl coenzyme A to glucosamine-1-phosphate (GlcN-1-P) to produce N-acetylglucosamine-1-phosphate (GlcNAc-1-P), which is converted into UDP-GlcNAc by the transfer of uridine 5-monophosphate (from uridine 5-triphosphate), a reaction catalyzed by the N-terminal domain. The protein is Bifunctional protein GlmU of Clostridium tetani (strain Massachusetts / E88).